The chain runs to 364 residues: Fructose-1,6-bisphosphatase class 1 3 (364 aa).

The Mg(2+) site is built by E101, D123, L125, and D126. Residues 126–129 (DGSS) and N218 contribute to the substrate site. E290 contributes to the Mg(2+) binding site.

Belongs to the FBPase class 1 family. Homotetramer. Mg(2+) is required as a cofactor.

It localises to the cytoplasm. The enzyme catalyses beta-D-fructose 1,6-bisphosphate + H2O = beta-D-fructose 6-phosphate + phosphate. The protein operates within carbohydrate biosynthesis; gluconeogenesis. The polypeptide is Fructose-1,6-bisphosphatase class 1 3 (Cupriavidus necator (strain ATCC 17699 / DSM 428 / KCTC 22496 / NCIMB 10442 / H16 / Stanier 337) (Ralstonia eutropha)).